We begin with the raw amino-acid sequence, 181 residues long: Probable cobalt-precorrin-6B C(15)-methyltransferase (decarboxylating) (181 aa).

S-adenosyl-L-methionine is bound by residues threonine 16, 40–44 (GCGSG), aspartate 61, and alanine 89.

This sequence belongs to the methyltransferase superfamily. Archaeal-type CbiT family.

The enzyme catalyses Co-precorrin-6B + S-adenosyl-L-methionine = Co-precorrin-7 + S-adenosyl-L-homocysteine + CO2. The protein operates within cofactor biosynthesis; adenosylcobalamin biosynthesis; cob(II)yrinate a,c-diamide from sirohydrochlorin (anaerobic route): step 8/10. Its function is as follows. Catalyzes the methylation of C-15 in cobalt-precorrin-6B followed by the decarboxylation of C-12 to form cobalt-precorrin-7. This chain is Probable cobalt-precorrin-6B C(15)-methyltransferase (decarboxylating), found in Methanococcus maripaludis (strain C7 / ATCC BAA-1331).